The primary structure comprises 304 residues: Acetylglutamate kinase (304 aa).

Substrate contacts are provided by residues 71 to 72 (GG), R93, and N193.

It belongs to the acetylglutamate kinase family. ArgB subfamily.

The protein resides in the cytoplasm. The catalysed reaction is N-acetyl-L-glutamate + ATP = N-acetyl-L-glutamyl 5-phosphate + ADP. It participates in amino-acid biosynthesis; L-arginine biosynthesis; N(2)-acetyl-L-ornithine from L-glutamate: step 2/4. Its function is as follows. Catalyzes the ATP-dependent phosphorylation of N-acetyl-L-glutamate. This Streptomyces avermitilis (strain ATCC 31267 / DSM 46492 / JCM 5070 / NBRC 14893 / NCIMB 12804 / NRRL 8165 / MA-4680) protein is Acetylglutamate kinase.